We begin with the raw amino-acid sequence, 1312 residues long: Beta-N-acetylhexosaminidase (1312 aa).

The N-terminal stretch at 1 to 33 is a signal peptide; that stretch reads MKHEKQQRFSIRKYAVGAASVLIGFAFQAQTVA. Over residues 38–59 the composition is skewed to polar residues; sequence TPTTTENQPTIHTVSDSPQSSE. Positions 38-178 are disordered; the sequence is TPTTTENQPT…ATEAGKERAA (141 aa). A compositionally biased stretch (basic and acidic residues) spans 118-177; it reads AEKETANKKAEEASPKKEEAKEVDSKESNTDKTDKDKPAKKDEAKAEADKPATEAGKERA. 2 catalytic domain regions span residues 176–616 and 621–1046; these read RAAT…TPEA and EAKR…PAVT. 2 consecutive G5 domains span residues 1059–1138 and 1150–1230; these read NVET…GAPV and TTEV…GTMV. Residues 1244–1290 form a disordered region; the sequence is EEKPKLEIPSQPAPSTAPAEESKVLPQDPAPVVTEKKLPETGTHDSA. Over residues 1277-1286 the composition is skewed to basic and acidic residues; sequence TEKKLPETGT. An LPXTG sorting signal motif is present at residues 1281–1285; sequence LPETG. Thr1284 bears the Pentaglycyl murein peptidoglycan amidated threonine mark. A propeptide spans 1285 to 1312 (removed by sortase); that stretch reads GTHDSAGLVVAGLMSTLAAYGLTKRKED.

Belongs to the glycosyl hydrolase 20 family.

The protein resides in the secreted. It localises to the cell wall. The enzyme catalyses Hydrolysis of terminal non-reducing N-acetyl-D-hexosamine residues in N-acetyl-beta-D-hexosaminides.. The polypeptide is Beta-N-acetylhexosaminidase (strH) (Streptococcus pneumoniae serotype 4 (strain ATCC BAA-334 / TIGR4)).